The chain runs to 763 residues: 5-methyltetrahydropteroyltriglutamate--homocysteine methyltransferase (763 aa).

5-methyltetrahydropteroyltri-L-glutamate-binding positions include 16–19 (RELK) and lysine 117. L-homocysteine is bound by residues 438-440 (IGS) and glutamate 491. L-methionine-binding positions include 438-440 (IGS) and glutamate 491. 5-methyltetrahydropteroyltri-L-glutamate contacts are provided by residues 522–523 (RC) and tryptophan 568. Aspartate 606 provides a ligand contact to L-homocysteine. An L-methionine-binding site is contributed by aspartate 606. Position 612 (glutamate 612) interacts with 5-methyltetrahydropteroyltri-L-glutamate. Zn(2+) is bound by residues histidine 648, cysteine 650, and glutamate 672. Residue histidine 701 is the Proton donor of the active site. Cysteine 733 lines the Zn(2+) pocket.

Belongs to the vitamin-B12 independent methionine synthase family. The cofactor is Zn(2+).

It carries out the reaction 5-methyltetrahydropteroyltri-L-glutamate + L-homocysteine = tetrahydropteroyltri-L-glutamate + L-methionine. It functions in the pathway amino-acid biosynthesis; L-methionine biosynthesis via de novo pathway; L-methionine from L-homocysteine (MetE route): step 1/1. In terms of biological role, catalyzes the transfer of a methyl group from 5-methyltetrahydrofolate to homocysteine resulting in methionine formation. The polypeptide is 5-methyltetrahydropteroyltriglutamate--homocysteine methyltransferase (Pseudomonas paraeruginosa (strain DSM 24068 / PA7) (Pseudomonas aeruginosa (strain PA7))).